Consider the following 193-residue polypeptide: Holliday junction branch migration complex subunit RuvA (193 aa).

The segment at 1–63 (MIGKLTGTVT…ENINKLYGFE (63 aa)) is domain I. The interval 64–148 (CRKSQEVARM…GIASSTNVHI (85 aa)) is domain II. Residues 149–150 (AS) form a flexible linker region. The segment at 150–193 (SEAVSALVKLGFQHKPSHKVVMEIMTKRPAIEIAELITLALKML) is domain III.

It belongs to the RuvA family. As to quaternary structure, homotetramer. Forms an RuvA(8)-RuvB(12)-Holliday junction (HJ) complex. HJ DNA is sandwiched between 2 RuvA tetramers; dsDNA enters through RuvA and exits via RuvB. An RuvB hexamer assembles on each DNA strand where it exits the tetramer. Each RuvB hexamer is contacted by two RuvA subunits (via domain III) on 2 adjacent RuvB subunits; this complex drives branch migration. In the full resolvosome a probable DNA-RuvA(4)-RuvB(12)-RuvC(2) complex forms which resolves the HJ.

Its subcellular location is the cytoplasm. Its function is as follows. The RuvA-RuvB-RuvC complex processes Holliday junction (HJ) DNA during genetic recombination and DNA repair, while the RuvA-RuvB complex plays an important role in the rescue of blocked DNA replication forks via replication fork reversal (RFR). RuvA specifically binds to HJ cruciform DNA, conferring on it an open structure. The RuvB hexamer acts as an ATP-dependent pump, pulling dsDNA into and through the RuvAB complex. HJ branch migration allows RuvC to scan DNA until it finds its consensus sequence, where it cleaves and resolves the cruciform DNA. This chain is Holliday junction branch migration complex subunit RuvA, found in Neorickettsia sennetsu (strain ATCC VR-367 / Miyayama) (Ehrlichia sennetsu).